The following is a 501-amino-acid chain: Putative ribose/galactose/methyl galactoside import ATP-binding protein 1 (501 aa).

ABC transporter domains follow at residues 5-237 and 249-492; these read VSLS…VGRQ and VPGE…MTRS. Residue 37–44 coordinates ATP; sequence GENGAGKS.

This sequence belongs to the ABC transporter superfamily. Carbohydrate importer 2 (CUT2) (TC 3.A.1.2) family.

It is found in the cell inner membrane. The enzyme catalyses D-ribose(out) + ATP + H2O = D-ribose(in) + ADP + phosphate + H(+). The catalysed reaction is D-galactose(out) + ATP + H2O = D-galactose(in) + ADP + phosphate + H(+). Part of an ABC transporter complex involved in carbohydrate import. Could be involved in ribose, galactose and/or methyl galactoside import. Responsible for energy coupling to the transport system. This Rhizobium meliloti (strain 1021) (Ensifer meliloti) protein is Putative ribose/galactose/methyl galactoside import ATP-binding protein 1.